The chain runs to 334 residues: Ornithine carbamoyltransferase, catabolic (334 aa).

Carbamoyl phosphate-binding positions include 57-60, Gln-84, Arg-108, and 135-138; these read STRT and HPTQ. L-ornithine contacts are provided by residues Asn-168, Asp-232, and 236–237; that span reads SM. Carbamoyl phosphate is bound by residues 274–275 and Arg-320; that span reads CL.

Belongs to the aspartate/ornithine carbamoyltransferase superfamily. OTCase family.

It is found in the cytoplasm. The catalysed reaction is carbamoyl phosphate + L-ornithine = L-citrulline + phosphate + H(+). Its pathway is amino-acid degradation; L-arginine degradation via ADI pathway; carbamoyl phosphate from L-arginine: step 2/2. Functionally, reversibly catalyzes the transfer of the carbamoyl group from carbamoyl phosphate (CP) to the N(epsilon) atom of ornithine (ORN) to produce L-citrulline. This chain is Ornithine carbamoyltransferase, catabolic (arcB), found in Rhizobium meliloti (strain 1021) (Ensifer meliloti).